We begin with the raw amino-acid sequence, 358 residues long: MTKRILFTGGGTVGHVTLNLILIPKFLKDGWEVHYIGDKKGIEYQEIQKSGYPVTFHAIKTGKLRRYFSWQNLIDVFKVATGLLQSLVIINKVKPQALFSKGGFVSVPPVIASRLMGVPVFVHESDLSMGLANKIALKFASTMYTTFESQVTNPIIKHIGAVTKVSKESGNYLPELSDIQNKFNPQLKTLLFIGGSAGAKVFNQLITNNPDLTKAFNVINITGDSQLNELSQNLYRVDYVTDLYQPLMQLADLVITRGGSNTLFELLAMQKLHLIVPLGKEASRGDQLENANYFEKQGYARQLSEELFNPETLISEVHYLLEHQDQFRKAMSESQEIKSPDVFYDLLKNDISLKAKGK.

Residues serine 196 and glutamine 287 each contribute to the UDP-N-acetyl-alpha-D-glucosamine site.

The protein belongs to the glycosyltransferase 28 family. MurG subfamily.

It is found in the cell membrane. The enzyme catalyses Mur2Ac(oyl-L-Ala-gamma-D-Glu-L-Lys-D-Ala-D-Ala)-di-trans,octa-cis-undecaprenyl diphosphate + UDP-N-acetyl-alpha-D-glucosamine = beta-D-GlcNAc-(1-&gt;4)-Mur2Ac(oyl-L-Ala-gamma-D-Glu-L-Lys-D-Ala-D-Ala)-di-trans,octa-cis-undecaprenyl diphosphate + UDP + H(+). The protein operates within cell wall biogenesis; peptidoglycan biosynthesis. Cell wall formation. Catalyzes the transfer of a GlcNAc subunit on undecaprenyl-pyrophosphoryl-MurNAc-pentapeptide (lipid intermediate I) to form undecaprenyl-pyrophosphoryl-MurNAc-(pentapeptide)GlcNAc (lipid intermediate II). The chain is UDP-N-acetylglucosamine--N-acetylmuramyl-(pentapeptide) pyrophosphoryl-undecaprenol N-acetylglucosamine transferase from Streptococcus uberis (strain ATCC BAA-854 / 0140J).